Reading from the N-terminus, the 145-residue chain is MYPAHLLVLLAVCVSLLGASAIPPLPLNLVQFTYLIQCANKGSRASYHYADYGCYCGAGGSGTPVDELDRCCKVHDDCYGEAEKMGCYPKLTMYNYYCGTEGPYCNTKTDCQRYVCACDLQAAKCFARSPYNNKNYNIDTSKRCK.

A signal peptide spans M1–A21. A propeptide spanning residues I22–L27 is cleaved from the precursor. 7 cysteine pairs are disulfide-bonded: C38-C98, C54-C144, C56-C72, C71-C125, C78-C118, C87-C111, and C105-C116. Residues Y55, G57, and G59 each contribute to the Ca(2+) site. H75 is a catalytic residue. Ca(2+) is bound at residue D76. D119 is a catalytic residue.

This sequence belongs to the phospholipase A2 family. Group I subfamily. D49 sub-subfamily. Ca(2+) serves as cofactor. As to expression, expressed by the venom gland.

It localises to the secreted. The catalysed reaction is a 1,2-diacyl-sn-glycero-3-phosphocholine + H2O = a 1-acyl-sn-glycero-3-phosphocholine + a fatty acid + H(+). PLA2 catalyzes the calcium-dependent hydrolysis of the 2-acyl groups in 3-sn-phosphoglycerides. The polypeptide is Basic phospholipase A2 cL038 (Laticauda semifasciata (Black-banded sea krait)).